The primary structure comprises 86 residues: U2-sicaritoxin-Li1b (86 aa).

Residues 1-20 (MKIELFLVVIFALAIHMATA) form the signal peptide. Residues 21–33 (EEVIESDIEPAER) constitute a propeptide that is removed on maturation. 4 disulfides stabilise this stretch: cysteine 35/cysteine 53, cysteine 42/cysteine 62, cysteine 52/cysteine 71, and cysteine 64/cysteine 69. Residue lysine 85 is modified to Lysine amide.

It belongs to the neurotoxin 39 family. In terms of tissue distribution, expressed by the venom gland.

The protein resides in the secreted. Toxin active against S.frugiperda larvae. May act on sodium channels (Nav). This chain is U2-sicaritoxin-Li1b, found in Loxosceles intermedia (Brown spider).